The sequence spans 146 residues: Leghemoglobin Lb120-34 (146 aa).

The 145-residue stretch at 2–146 (GFTEKQEALV…LASAIKKAMN (145 aa)) folds into the Globin domain. Nitrated tyrosine is present on residues Tyr24 and Tyr29. Position 44 (Ser44) interacts with heme b. At Ser44 the chain carries Phosphoserine. Position 61 (His61) interacts with O2. Heme b contacts are provided by Lys64, His93, and Lys96. A Nitrated tyrosine modification is found at Tyr134.

It belongs to the plant globin family. Monomer. In terms of processing, nitrated in effective nodules and particularly in hypoxic conditions; this mechanism may play a protective role in the symbiosis by buffering toxic peroxynitrite NO(2)(-). Nitration level decrease during nodule senescence. Post-translationally, phosphorylation at Ser-44 disrupts the molecular environment of its porphyrin ring oxygen binding pocket, thus leading to a reduced oxygen consumption and to the delivery of oxygen O(2) to symbiosomes. Root nodules.

It is found in the cytoplasm. The protein localises to the cytosol. It localises to the nucleus. Functionally, leghemoglobin that reversibly binds oxygen O(2) through a pentacoordinated heme iron. In root nodules, facilitates the diffusion of oxygen to the bacteroids while preventing the bacterial nitrogenase from being inactivated by buffering dioxygen, nitric oxide and carbon monoxide, and promoting the formation of reactive oxygen species (ROS, e.g. H(2)O(2)). This role is essential for symbiotic nitrogen fixation (SNF). This Pisum sativum (Garden pea) protein is Leghemoglobin Lb120-34.